A 190-amino-acid polypeptide reads, in one-letter code: Corticoliberin (190 aa).

Positions 1-24 (MRLPLLVSVGVLLVALLPSPPCRA) are cleaved as a signal peptide. The propeptide occupies 25–147 (LLSRGPIPGA…QEAPAARKRR (123 aa)). 2 disordered regions span residues 33–53 (GARQASQHPQPLSFFQPLPQP) and 115–151 (PRRPLDSPAGPAKRGTENALGSRQEAPAARKRRSQEP). A compositionally biased stretch (low complexity) spans 41 to 53 (PQPLSFFQPLPQP). Alanine 188 carries the alanine amide modification.

The protein belongs to the sauvagine/corticotropin-releasing factor/urotensin I family. In terms of assembly, interacts (via C-terminus) with CRFR1 (via N-terminal extracellular domain). Produced by the hypothalamus.

Its subcellular location is the secreted. Hormone regulating the release of corticotropin from pituitary gland. Induces NLRP6 in intestinal epithelial cells, hence may influence gut microbiota profile. The polypeptide is Corticoliberin (CRH) (Ovis aries (Sheep)).